We begin with the raw amino-acid sequence, 402 residues long: Phosphoglycerate kinase (402 aa).

Substrate contacts are provided by residues D24–N26, R40, H63–R66, R122, and R155. ATP-binding positions include K206, G297, E328, and G357 to S360.

It belongs to the phosphoglycerate kinase family. Monomer.

The protein localises to the cytoplasm. It catalyses the reaction (2R)-3-phosphoglycerate + ATP = (2R)-3-phospho-glyceroyl phosphate + ADP. The protein operates within carbohydrate degradation; glycolysis; pyruvate from D-glyceraldehyde 3-phosphate: step 2/5. In Synechococcus sp. (strain RCC307), this protein is Phosphoglycerate kinase.